The primary structure comprises 523 residues: MNSFPNDDLVYEILLRLPAKSVARCSCVSKLRRSILSRQDFTELFLTKSSARPRLLFGVKRANGEGLFFSSTQPRNSYEKSSLVVAADFHTKFSEVISREICSYASGLIYLSDMRISVNDEDVVRAICNPITGNYLGFDPIDKQFKVLFMAYPSGPDDHKILTLGTRRMRWRKIHCPLTHDPFCEGICINGVLYYLAIQIDEPLVNQRSFVIVCFDVRFEKFTFIDVDCFYHLINYKGKLGGIDWKHGNANGSRTFELSMWVLEDVEKHEWSKYDCTFLEYEVMFYNISLAVGMTATCEIVLSEKFASKSFYVFYFNPERETLQRVEIQGLENHCRVYTITDHVEDLNVNYKRKHKMALVRRFLAAKKIIGGSVAKLRKETSAILYLNRYWSYPASTTLINYKGKVGVINLTHAYERVFPLQLRMTVLEDFEKQEWSTYVYTLMAENIVVKYVSVVGMTATGDIVLVKTNACKPFYVFYFNPGRNTLLSVEIQGVGEDHKCLNFHTVCAFVDHVEDLQFSFKN.

One can recognise an F-box domain in the interval 4–44; it reads FPNDDLVYEILLRLPAKSVARCSCVSKLRRSILSRQDFTEL.

The protein is Putative F-box protein At1g30925 of Arabidopsis thaliana (Mouse-ear cress).